Reading from the N-terminus, the 234-residue chain is DNA repair and recombination protein RadB (234 aa).

It belongs to the eukaryotic RecA-like protein family. RadB subfamily.

Functionally, involved in DNA repair and in homologous recombination. May regulate the cleavage reactions of the branch-structured DNA. Has a very weak ATPase activity that is not stimulated by DNA. Binds DNA but does not promote DNA strands exchange. The sequence is that of DNA repair and recombination protein RadB from Methanobrevibacter smithii (strain ATCC 35061 / DSM 861 / OCM 144 / PS).